We begin with the raw amino-acid sequence, 245 residues long: DNA polymerase sliding clamp (245 aa).

It belongs to the PCNA family. As to quaternary structure, homotrimer. The subunits circularize to form a toroid; DNA passes through its center. Replication factor C (RFC) is required to load the toroid on the DNA.

Its function is as follows. Sliding clamp subunit that acts as a moving platform for DNA processing. Responsible for tethering the catalytic subunit of DNA polymerase and other proteins to DNA during high-speed replication. In Picrophilus torridus (strain ATCC 700027 / DSM 9790 / JCM 10055 / NBRC 100828 / KAW 2/3), this protein is DNA polymerase sliding clamp.